Consider the following 628-residue polypeptide: F-box only protein 21 (628 aa).

Positions 28-84 (SCLVNLPGEVLEYILCCGSLTAADIGRVSSTCRRLRELCQSSGKVWKEQFRVRWPSL) constitute an F-box domain.

In terms of assembly, directly interacts with SKP1 and CUL1.

In terms of biological role, substrate-recognition component of the SCF (SKP1-CUL1-F-box protein)-type E3 ubiquitin ligase complex. This chain is F-box only protein 21 (FBXO21), found in Homo sapiens (Human).